Here is a 374-residue protein sequence, read N- to C-terminus: Phosphate-binding protein PstS 1 (374 aa).

The first 23 residues, 1–23 (MKIRLHTLLAVLTAAPLLLAAAG), serve as a signal peptide directing secretion. A lipid anchor (N-palmitoyl cysteine) is attached at C24. Residue C24 is the site of S-diacylglycerol cysteine attachment. A disordered region spans residues 25–48 (GSKPPSGSPETGAGAGTVATTPAS). Residues 58–60 (STL), S88, D106, and 189–191 (SGD) contribute to the phosphate site.

This sequence belongs to the PstS family. As to quaternary structure, the complex is composed of two ATP-binding proteins (PstB), two transmembrane proteins (PstC and PstA) and a solute-binding protein (PstS).

It localises to the cell membrane. Functionally, part of the ABC transporter complex PstSACB involved in phosphate import. The protein is Phosphate-binding protein PstS 1 (pstS1) of Mycobacterium tuberculosis (strain CDC 1551 / Oshkosh).